The sequence spans 343 residues: Isopentenyl-diphosphate delta-isomerase (343 aa).

A substrate-binding site is contributed by 6-7 (RK). FMN-binding positions include Ser-63, 64 to 66 (SMT), Ser-94, and Asn-122. Position 94–96 (94–96 (SMR)) interacts with substrate. Residue Gln-157 coordinates substrate. A Mg(2+)-binding site is contributed by Glu-158. FMN-binding positions include Lys-189, Thr-219, 269 to 271 (GLK), and 290 to 291 (AG).

Belongs to the IPP isomerase type 2 family. Homooctamer. Dimer of tetramers. The cofactor is FMN. NADPH serves as cofactor. It depends on Mg(2+) as a cofactor.

It localises to the cytoplasm. It catalyses the reaction isopentenyl diphosphate = dimethylallyl diphosphate. Its function is as follows. Involved in the biosynthesis of isoprenoids. Catalyzes the 1,3-allylic rearrangement of the homoallylic substrate isopentenyl (IPP) to its allylic isomer, dimethylallyl diphosphate (DMAPP). This Rickettsia bellii (strain OSU 85-389) protein is Isopentenyl-diphosphate delta-isomerase.